A 220-amino-acid polypeptide reads, in one-letter code: 7-cyano-7-deazaguanine synthase (220 aa).

7–17 (LSGGLDSAVCL) is an ATP binding site. Positions 191, 199, 202, and 205 each coordinate Zn(2+).

This sequence belongs to the QueC family. As to quaternary structure, homodimer. Zn(2+) is required as a cofactor.

It carries out the reaction 7-carboxy-7-deazaguanine + NH4(+) + ATP = 7-cyano-7-deazaguanine + ADP + phosphate + H2O + H(+). It functions in the pathway purine metabolism; 7-cyano-7-deazaguanine biosynthesis. In terms of biological role, catalyzes the ATP-dependent conversion of 7-carboxy-7-deazaguanine (CDG) to 7-cyano-7-deazaguanine (preQ(0)). The polypeptide is 7-cyano-7-deazaguanine synthase (Desulforudis audaxviator (strain MP104C)).